A 189-amino-acid polypeptide reads, in one-letter code: MLEKLKSTLEKSPVIKKGEYHYFVSPVTDGIPLTEPNLLMEIVDAIEKKFDLEDIDKIVCIEAMGIHLATALSIKTGIPFVVIRKKKYGLPGEVEIRQVTGYGESNLYVNGVNSGDKILVIDDVVSTGGTLISVINALKKISADIKYVIAVVEKGEGRKKVEKETGTKVNTLVKVDVIDGEVKIINNEV.

The protein belongs to the purine/pyrimidine phosphoribosyltransferase family. Archaeal HPRT subfamily. As to quaternary structure, homodimer.

The protein resides in the cytoplasm. It catalyses the reaction IMP + diphosphate = hypoxanthine + 5-phospho-alpha-D-ribose 1-diphosphate. The catalysed reaction is GMP + diphosphate = guanine + 5-phospho-alpha-D-ribose 1-diphosphate. It participates in purine metabolism; IMP biosynthesis via salvage pathway; IMP from hypoxanthine: step 1/1. In terms of biological role, catalyzes a salvage reaction resulting in the formation of IMP that is energically less costly than de novo synthesis. This chain is Hypoxanthine/guanine phosphoribosyltransferase, found in Methanothermus fervidus (strain ATCC 43054 / DSM 2088 / JCM 10308 / V24 S).